A 512-amino-acid polypeptide reads, in one-letter code: Altronate oxidoreductase (512 aa).

Residue 26-37 (VLQFGEGNFLRG) participates in NAD(+) binding.

Belongs to the mannitol dehydrogenase family. UxaB subfamily.

It catalyses the reaction D-altronate + NAD(+) = keto-D-tagaturonate + NADH + H(+). It participates in carbohydrate metabolism; pentose and glucuronate interconversion. This Halalkalibacterium halodurans (strain ATCC BAA-125 / DSM 18197 / FERM 7344 / JCM 9153 / C-125) (Bacillus halodurans) protein is Altronate oxidoreductase.